The chain runs to 127 residues: Holo-[acyl-carrier-protein] synthase (127 aa).

Mg(2+)-binding residues include Asp-9 and Glu-58.

The protein belongs to the P-Pant transferase superfamily. AcpS family. The cofactor is Mg(2+).

The protein resides in the cytoplasm. The catalysed reaction is apo-[ACP] + CoA = holo-[ACP] + adenosine 3',5'-bisphosphate + H(+). Functionally, transfers the 4'-phosphopantetheine moiety from coenzyme A to a Ser of acyl-carrier-protein. This Shewanella sp. (strain MR-4) protein is Holo-[acyl-carrier-protein] synthase.